We begin with the raw amino-acid sequence, 128 residues long: Large ribosomal subunit protein bL19 (128 aa).

This sequence belongs to the bacterial ribosomal protein bL19 family.

Its function is as follows. This protein is located at the 30S-50S ribosomal subunit interface and may play a role in the structure and function of the aminoacyl-tRNA binding site. The polypeptide is Large ribosomal subunit protein bL19 (Caldicellulosiruptor bescii (strain ATCC BAA-1888 / DSM 6725 / KCTC 15123 / Z-1320) (Anaerocellum thermophilum)).